We begin with the raw amino-acid sequence, 247 residues long: Sugar fermentation stimulation protein homolog (247 aa).

The protein belongs to the SfsA family.

The chain is Sugar fermentation stimulation protein homolog from Aeromonas salmonicida (strain A449).